Reading from the N-terminus, the 216-residue chain is MPIFRNARFEVSIAKSGALPPPEGAEIAFAGRSNAGKSSAINTLADHTRLAFVSKTPGRTQLINFFRLDCGAVLVDLPGYGYAKVPENIRRQWQGLLEHYLRKRENLIGLVLIMDSRHPLTPLDRQMIDWFVPGGRPIHVLLTKCDKLSRNEAAATLASVRREVAALGPQISVQLFSSLKKIGMEEVEHKVAGWLGLPSDDLPAIPTPAQLRAAGK.

The EngB-type G domain occupies 23 to 197 (EGAEIAFAGR…EHKVAGWLGL (175 aa)). GTP-binding positions include 31–38 (GRSNAGKS), 58–62 (GRTQL), 76–79 (DLPG), 143–146 (TKCD), and 176–178 (FSS). Mg(2+)-binding residues include S38 and T60.

Belongs to the TRAFAC class TrmE-Era-EngA-EngB-Septin-like GTPase superfamily. EngB GTPase family. Mg(2+) serves as cofactor.

In terms of biological role, necessary for normal cell division and for the maintenance of normal septation. The sequence is that of Probable GTP-binding protein EngB from Aromatoleum aromaticum (strain DSM 19018 / LMG 30748 / EbN1) (Azoarcus sp. (strain EbN1)).